We begin with the raw amino-acid sequence, 95 residues long: Suppressor of silencing 2b (95 aa).

The tract at residues 8–18 (LHEIIRKLERM) is homotetramerization. Residues 8 to 40 (LHEIIRKLERMNQKKQAQRKRHKLNRKERGHKS) adopt a coiled-coil conformation. The segment at 16–49 (ERMNQKKQAQRKRHKLNRKERGHKSPSEQRRSEL) is disordered. The segment covering 23 to 37 (QAQRKRHKLNRKERG) has biased composition (basic residues). The short motif at 26 to 30 (RKRHK) is the Nuclear localization signal element. Over residues 38-49 (HKSPSEQRRSEL) the composition is skewed to basic and acidic residues.

This sequence belongs to the cucumovirus/ilarvirus protein 2b family. Homodimer. Homotetramer (dimer of dimers).

It is found in the host nucleus. Acts as a suppressor of RNA-mediated gene silencing, also known as post-transcriptional gene silencing (PTGS), a mechanism of plant viral defense that limits the accumulation of viral RNAs. Forms a homodimer to measure siRNA duplex in a length-preference mode. Binds to both siRNA duplexes (19bp) and long siRNA duplexes (30bp). This chain is Suppressor of silencing 2b, found in Canna (Florist's daisy).